We begin with the raw amino-acid sequence, 241 residues long: Pyridoxine 5'-phosphate synthase (241 aa).

Asn7 is a binding site for 3-amino-2-oxopropyl phosphate. 9–10 lines the 1-deoxy-D-xylulose 5-phosphate pocket; it reads DH. Residue Arg18 participates in 3-amino-2-oxopropyl phosphate binding. His43 (proton acceptor) is an active-site residue. The 1-deoxy-D-xylulose 5-phosphate site is built by Arg45 and His50. The active-site Proton acceptor is the Glu70. Thr100 serves as a coordination point for 1-deoxy-D-xylulose 5-phosphate. His191 (proton donor) is an active-site residue. Residues Ser192 and 213 to 214 each bind 3-amino-2-oxopropyl phosphate; that span reads GH.

It belongs to the PNP synthase family. As to quaternary structure, homooctamer; tetramer of dimers.

The protein resides in the cytoplasm. It carries out the reaction 3-amino-2-oxopropyl phosphate + 1-deoxy-D-xylulose 5-phosphate = pyridoxine 5'-phosphate + phosphate + 2 H2O + H(+). The protein operates within cofactor biosynthesis; pyridoxine 5'-phosphate biosynthesis; pyridoxine 5'-phosphate from D-erythrose 4-phosphate: step 5/5. Its function is as follows. Catalyzes the complicated ring closure reaction between the two acyclic compounds 1-deoxy-D-xylulose-5-phosphate (DXP) and 3-amino-2-oxopropyl phosphate (1-amino-acetone-3-phosphate or AAP) to form pyridoxine 5'-phosphate (PNP) and inorganic phosphate. The sequence is that of Pyridoxine 5'-phosphate synthase from Nitrosomonas eutropha (strain DSM 101675 / C91 / Nm57).